The sequence spans 290 residues: Undecaprenyl-diphosphatase (290 aa).

Helical transmembrane passes span 39-59 (PGAAFTAISQIGTEAAVLIYF), 85-105 (AQMGWLVIVGSIPIGVLGITL), 118-138 (LIATTLIVMGIVLGVADRLAA), 202-222 (SFLLAIPAVLASGAYELKDVG), 230-250 (PTIFATLVAFFVGYAVIAWFM), and 261-281 (FVIYRILLGVVLFILIWAGVL).

This sequence belongs to the UppP family.

The protein resides in the cell membrane. The catalysed reaction is di-trans,octa-cis-undecaprenyl diphosphate + H2O = di-trans,octa-cis-undecaprenyl phosphate + phosphate + H(+). Functionally, catalyzes the dephosphorylation of undecaprenyl diphosphate (UPP). Confers resistance to bacitracin. The sequence is that of Undecaprenyl-diphosphatase from Streptomyces griseus subsp. griseus (strain JCM 4626 / CBS 651.72 / NBRC 13350 / KCC S-0626 / ISP 5235).